The following is a 181-amino-acid chain: uncharacterized protein (181 aa).

This is an uncharacterized protein from Borreliella burgdorferi (strain ATCC 35210 / DSM 4680 / CIP 102532 / B31) (Borrelia burgdorferi).